The primary structure comprises 478 residues: 2-succinylbenzoate--CoA ligase (478 aa).

The protein belongs to the ATP-dependent AMP-binding enzyme family. MenE subfamily.

The catalysed reaction is 2-succinylbenzoate + ATP + CoA = 2-succinylbenzoyl-CoA + AMP + diphosphate. Its pathway is quinol/quinone metabolism; 1,4-dihydroxy-2-naphthoate biosynthesis; 1,4-dihydroxy-2-naphthoate from chorismate: step 5/7. The protein operates within quinol/quinone metabolism; menaquinone biosynthesis. Its function is as follows. Converts 2-succinylbenzoate (OSB) to 2-succinylbenzoyl-CoA (OSB-CoA). This Bacillus licheniformis (strain ATCC 14580 / DSM 13 / JCM 2505 / CCUG 7422 / NBRC 12200 / NCIMB 9375 / NCTC 10341 / NRRL NRS-1264 / Gibson 46) protein is 2-succinylbenzoate--CoA ligase.